A 408-amino-acid polypeptide reads, in one-letter code: MAENFVVVDGGVVAPKGFKANGHKDRKYGAALIYSETDAVAAGVFTTNKVFAHPVALSKDVLVNNSVFRAIVANSGNANCFTKGGMDDAKLLVKKAAELLNIPENQVLSASTGVIGRRMPMDIITTEVERAFENMSSENSNKNASAAIMTTDAFPKTIAVEFEVNGKSVRIGGIAKGAGMIAPNMLHATMLGFITTDIEISKEDLTNSLQKATDESFNNAVVDGDMSTNDTVYVLANAQSGVKYIDCKDKFDSALAYVSKELAKMIVSDGEGAKKLIEATVYGAETKEDAKKASMSIIRSLLLKTAVFGADPNWGRIAAAVGYSGAEMDMSNFDIIISDISLEKQAILVKSGEQIADCGTPELKLAEEIMKEDKIKIIVDLKMGSFENTAFGCDLGYDYVRINSEYTT.

Substrate contacts are provided by T150, K176, T189, E271, N403, and T408. The Nucleophile role is filled by T189.

This sequence belongs to the ArgJ family. As to quaternary structure, heterotetramer of two alpha and two beta chains.

It is found in the cytoplasm. The enzyme catalyses N(2)-acetyl-L-ornithine + L-glutamate = N-acetyl-L-glutamate + L-ornithine. Its pathway is amino-acid biosynthesis; L-arginine biosynthesis; L-ornithine and N-acetyl-L-glutamate from L-glutamate and N(2)-acetyl-L-ornithine (cyclic): step 1/1. Its function is as follows. Catalyzes the transfer of the acetyl group from N(2)-acetylornithine to glutamate, forming N-acetylglutamate and L-ornithine. The chain is Glutamate N-acetyltransferase from Methanococcus maripaludis (strain C7 / ATCC BAA-1331).